Consider the following 500-residue polypeptide: Glycogen synthase (500 aa).

Residue Lys-20 coordinates ADP-alpha-D-glucose.

Belongs to the glycosyltransferase 1 family. Bacterial/plant glycogen synthase subfamily.

The catalysed reaction is [(1-&gt;4)-alpha-D-glucosyl](n) + ADP-alpha-D-glucose = [(1-&gt;4)-alpha-D-glucosyl](n+1) + ADP + H(+). Its pathway is glycan biosynthesis; glycogen biosynthesis. Its function is as follows. Synthesizes alpha-1,4-glucan chains using ADP-glucose. The protein is Glycogen synthase of Desulforudis audaxviator (strain MP104C).